A 118-amino-acid chain; its full sequence is Small ribosomal subunit protein uS13 (118 aa).

The tract at residues 94-118 (GLPLRGQRTKTNARTRKGPRKPIKK) is disordered.

The protein belongs to the universal ribosomal protein uS13 family. As to quaternary structure, part of the 30S ribosomal subunit. Forms a loose heterodimer with protein S19. Forms two bridges to the 50S subunit in the 70S ribosome.

Functionally, located at the top of the head of the 30S subunit, it contacts several helices of the 16S rRNA. In the 70S ribosome it contacts the 23S rRNA (bridge B1a) and protein L5 of the 50S subunit (bridge B1b), connecting the 2 subunits; these bridges are implicated in subunit movement. Contacts the tRNAs in the A and P-sites. This is Small ribosomal subunit protein uS13 from Cellvibrio japonicus (strain Ueda107) (Pseudomonas fluorescens subsp. cellulosa).